Here is a 252-residue protein sequence, read N- to C-terminus: 2-succinyl-6-hydroxy-2,4-cyclohexadiene-1-carboxylate synthase (252 aa).

It belongs to the AB hydrolase superfamily. MenH family. In terms of assembly, monomer.

The enzyme catalyses 5-enolpyruvoyl-6-hydroxy-2-succinyl-cyclohex-3-ene-1-carboxylate = (1R,6R)-6-hydroxy-2-succinyl-cyclohexa-2,4-diene-1-carboxylate + pyruvate. The protein operates within quinol/quinone metabolism; 1,4-dihydroxy-2-naphthoate biosynthesis; 1,4-dihydroxy-2-naphthoate from chorismate: step 3/7. It participates in quinol/quinone metabolism; menaquinone biosynthesis. Its function is as follows. Catalyzes a proton abstraction reaction that results in 2,5-elimination of pyruvate from 2-succinyl-5-enolpyruvyl-6-hydroxy-3-cyclohexene-1-carboxylate (SEPHCHC) and the formation of 2-succinyl-6-hydroxy-2,4-cyclohexadiene-1-carboxylate (SHCHC). This chain is 2-succinyl-6-hydroxy-2,4-cyclohexadiene-1-carboxylate synthase, found in Escherichia coli O7:K1 (strain IAI39 / ExPEC).